A 393-amino-acid polypeptide reads, in one-letter code: O-phospho-L-seryl-tRNA:Cys-tRNA synthase 1 (393 aa).

Pyridoxal 5'-phosphate is bound by residues 85–86 (AR), asparagine 190, and 213–215 (SGH). Residue lysine 216 is modified to N6-(pyridoxal phosphate)lysine.

It belongs to the SepCysS family. As to quaternary structure, homodimer. Interacts with SepRS. Pyridoxal 5'-phosphate serves as cofactor.

It carries out the reaction O-phospho-L-seryl-tRNA(Cys) + hydrogen sulfide + H(+) = L-cysteinyl-tRNA(Cys) + phosphate. Its function is as follows. Converts O-phospho-L-seryl-tRNA(Cys) (Sep-tRNA(Cys)) to L-cysteinyl-tRNA(Cys) (Cys-tRNA(Cys)). This chain is O-phospho-L-seryl-tRNA:Cys-tRNA synthase 1, found in Methanospirillum hungatei JF-1 (strain ATCC 27890 / DSM 864 / NBRC 100397 / JF-1).